The sequence spans 180 residues: MNVNLEKKYKNTIVKELFKEQRFQSIMQVPVVKKIVVNMGAGDATQNSKVIEDITNELALITGLRPVVTKAKDSIASFKLREGMPIGAKVTLRGKKMYQFLDKLINIALPRVRDFRGLNKDAFDGRGNYTLGIKEQIIFPEIDYDKVKRVRGMDITIVTSATNDADARALLRKMGMPFKK.

Belongs to the universal ribosomal protein uL5 family. Part of the 50S ribosomal subunit; part of the 5S rRNA/L5/L18/L25 subcomplex. Contacts the 5S rRNA and the P site tRNA. Forms a bridge to the 30S subunit in the 70S ribosome.

Its function is as follows. This is one of the proteins that bind and probably mediate the attachment of the 5S RNA into the large ribosomal subunit, where it forms part of the central protuberance. In the 70S ribosome it contacts protein S13 of the 30S subunit (bridge B1b), connecting the 2 subunits; this bridge is implicated in subunit movement. Contacts the P site tRNA; the 5S rRNA and some of its associated proteins might help stabilize positioning of ribosome-bound tRNAs. The sequence is that of Large ribosomal subunit protein uL5 from Spiroplasma kunkelii.